We begin with the raw amino-acid sequence, 255 residues long: F-box/SPRY domain-containing protein 1 (255 aa).

The region spanning 3-51 (DPVAALCNFNVLEVIFSYLDLNDLSRCSQVCRSWHHFLNDENSDVWRWH) is the F-box domain. Positions 61–253 (MKSDLLTSVS…VSMVYLGTPL (193 aa)) constitute a B30.2/SPRY domain.

It belongs to the FBXO45/Fsn family. Component of an E3 ubiquitin ligase complex composed of hiw and Fsn.

The protein localises to the synapse. The protein operates within protein modification; protein ubiquitination. In terms of biological role, required in the presynaptic motoneuron to down-regulate the levels of wnd and restrain synaptic terminal growth at the neuromuscular junction (NMJ). The chain is F-box/SPRY domain-containing protein 1 from Drosophila willistoni (Fruit fly).